Consider the following 435-residue polypeptide: UPF0597 protein ASA_0240 (435 aa).

Belongs to the UPF0597 family.

The sequence is that of UPF0597 protein ASA_0240 from Aeromonas salmonicida (strain A449).